The sequence spans 387 residues: Deoxyguanosinetriphosphate triphosphohydrolase-like protein (387 aa).

Residues 78 to 209 form the HD domain; that stretch reads RLTHSLEVAQ…ANLADEVAYN (132 aa).

The protein belongs to the dGTPase family. Type 2 subfamily.

The sequence is that of Deoxyguanosinetriphosphate triphosphohydrolase-like protein from Ralstonia nicotianae (strain ATCC BAA-1114 / GMI1000) (Ralstonia solanacearum).